We begin with the raw amino-acid sequence, 446 residues long: SWI/SNF chromatin-remodeling accessory subunit 1 (446 aa).

Residues 1–53 are disordered; sequence MQTQARPPVPQGPRFNHPATPQQVRRPINAPLPGQTAQIQGNRGPQPPKKKKR. Residues 220–297 enclose the SWIB/MDM2 domain; it reads YQPMKFKLHP…PQRLHQLLQQ (78 aa).

Belongs to the SMARCD family. Component of the multiprotein chromatin-remodeling complexes SWI/SNF: SWI/SNF-A (BAF), SWI/SNF-B (PBAF) and related complexes. The canonical complex contains a catalytic subunit swsn-4, core subunits swsn-1 and swsn-5, and accessory subunits swsn-3, swsn-6, phf-10, dpff-1, swsn-9 and either ham-3/swsn-2.1 or swsn-2.2. May interact with blmp-1. In terms of tissue distribution, broadly expressed in all cell types.

The protein localises to the nucleus. Functionally, involved in transcriptional activation and repression of select genes by chromatin remodeling (alteration of DNA-nucleosome topology). Component of SWI/SNF chromatin remodeling complexes that carry out key enzymatic activities, changing chromatin structure by altering DNA-histone contacts within a nucleosome in an ATP-dependent manner. Required for the blmp-1-mediated transcriptional activation or repression of several hypodermal genes such as bed-3. Involved in regulating differentiation, migration and axon pathfinding of specific serotonergic neurons (HSNs). Probably regulates vulva development through the let-60/Ras pathway. May be involved in regulation of developmental processes in the embryo driven by the Wnt pathway. Involved in gonadogenesis. In Caenorhabditis elegans, this protein is SWI/SNF chromatin-remodeling accessory subunit 1.